Consider the following 555-residue polypeptide: MNDTKDNKVYSSARHSKYWQQLQTLAESPWSLAALFAQDNTRTQHFSMQAGALYMDYSKQCIDDAVLENLLNLANSCELAARIQSLLQGAMVNTSEERAALHTALRLPATASLQLDTQDVVADVHQSLLQVERLSERVRSGTWRGFSGQAITDVVNIGVGGSDLGPLMATTALDEWADTCVEVHFVSNMDGTQLDNLLKHLNPETTLFIISSKSFGTVDTLSNAKTALSWLLATAKLRAGTEDSVRRRHFIGISANGQKMSAWGIHPEHQLQLWEWVGGRFSLWSAIGLAIAIRIGMSGFKELLAGAHSMDDHFAQADFAKNVPVLLGLIAVWNSTFLQVNAHTVLPYDGRLSYLPSYLTQLEMESNGKSVTQHGDRIDYDTCPILWGEIGSNAQHAFYQLLHQGTQQVSCDFIACVRRYSDEAKNTPLQQQHELSLANCLAQSRVLAFGNAAIAESDGQVACDADKYKYYRGNQPSTTLLLDELTPHSLGALIALYEHKVYVMASIWDINPFDQWGVEMGKQMAESVHDAMQQERGAQFDTSTNQLLKHIKELS.

The Proton donor role is filled by Glu-365. Active-site residues include His-396 and Lys-522.

This sequence belongs to the GPI family.

The protein localises to the cytoplasm. The enzyme catalyses alpha-D-glucose 6-phosphate = beta-D-fructose 6-phosphate. It participates in carbohydrate biosynthesis; gluconeogenesis. The protein operates within carbohydrate degradation; glycolysis; D-glyceraldehyde 3-phosphate and glycerone phosphate from D-glucose: step 2/4. Catalyzes the reversible isomerization of glucose-6-phosphate to fructose-6-phosphate. The chain is Glucose-6-phosphate isomerase from Psychrobacter arcticus (strain DSM 17307 / VKM B-2377 / 273-4).